A 307-amino-acid chain; its full sequence is 2-methoxy-6-polyprenyl-1,4-benzoquinol methylase, mitochondrial (307 aa).

Residues 1–19 (MLISSRIVRSSLVNVPLRL) constitute a mitochondrion transit peptide. S-adenosyl-L-methionine contacts are provided by residues S122, D148, 179–180 (NG), and S197.

Belongs to the class I-like SAM-binding methyltransferase superfamily. MenG/UbiE family. In terms of assembly, component of a multi-subunit COQ enzyme complex, composed of at least COQ3, COQ4, COQ5, COQ6, COQ7 and COQ9. Interacts with COQ3.

It localises to the mitochondrion inner membrane. It catalyses the reaction 2-methoxy-6-(all-trans-hexaprenyl)benzene-1,4-diol + S-adenosyl-L-methionine = 5-methoxy-2-methyl-3-(all-trans-hexaprenyl)benzene-1,4-diol + S-adenosyl-L-homocysteine + H(+). It functions in the pathway cofactor biosynthesis; ubiquinone biosynthesis. In terms of biological role, methyltransferase required for the conversion of 2-hexaprenyl-6-methoxy-1,4-benzoquinol (DDMQH2) to 2-hexaprenyl-3-methyl-6-methoxy-1,4-benzoquinol (DMQH2). The chain is 2-methoxy-6-polyprenyl-1,4-benzoquinol methylase, mitochondrial from Saccharomyces cerevisiae (strain ATCC 204508 / S288c) (Baker's yeast).